The following is a 547-amino-acid chain: Protein RBL (547 aa).

WD repeat units lie at residues 21–60 (LEHG…IAKE), 65–104 (DCSA…KIAR), 214–253 (SGAA…KNVL), 285–332 (EFQD…VKIL), and 334–373 (GPKE…NWSA). A disordered region spans residues 466 to 547 (SPASEEAGQN…GGDDDDDAYY (82 aa)). Positions 499 to 511 (SEKAMELQAEKAK) are enriched in basic and acidic residues. Residues 530–547 (QETDDSINGGDDDDDAYY) show a composition bias toward acidic residues.

Part of a complex composed of TRO, RBL and WDR5A. Interacts with TRO and WDR5A, but not with WDR5B. This complex is formed during both vegetative and reproductive development. In terms of tissue distribution, strongly expressed in root tips, shoot apices, vascular tissues, developing embryos and endosperms.

It is found in the nucleus. Promotes the expression of FLC and FLC homologs to repress the floral transition. Promotes WRKY70 and LTP7 genes epigenetic methylation (e.g. H3K4me3) and subsequent expression. The chain is Protein RBL from Arabidopsis thaliana (Mouse-ear cress).